Reading from the N-terminus, the 450-residue chain is Bestrophin homolog 1 (450 aa).

Over 1-31 the chain is Cytoplasmic; it reads MTINYHKEIMTSHPWTFFLLLFKWKGSIWKA. A helical membrane pass occupies residues 32-51; it reads VYMETIIFLICYGIISVIYK. Residues 52 to 60 are Extracellular-facing; the sequence is TAMGESSQR. Residues 61–82 form a helical membrane-spanning segment; it reads TFESLVRYFDKRLSYIPLEFVL. Residues 83 to 242 lie on the Cytoplasmic side of the membrane; it reads GFFVTTVVNR…DWVPLPLMYP (160 aa). The chain crosses the membrane as a helical span at residues 243 to 260; the sequence is QLVCLAVNLYFLVSIIAR. Topologically, residues 261–278 are extracellular; it reads QLVIEKHKMVDEVDVYFP. A helical membrane pass occupies residues 279–292; it reads VMTFLQFIFYMGWL. The Cytoplasmic portion of the chain corresponds to 293–450; the sequence is KVIDVMLNPF…WKIPTNPQKF (158 aa). N300, D305, and D308 together coordinate Ca(2+).

This sequence belongs to the anion channel-forming bestrophin (TC 1.A.46) family. Calcium-sensitive chloride channel subfamily. As to quaternary structure, forms oligomers.

It localises to the cell membrane. The catalysed reaction is chloride(in) = chloride(out). Its function is as follows. Ligand-gated anion channel that allows the movement of chloride monoatomic anions across cell membranes when activated by Calcium (Ca2+). In Caenorhabditis elegans, this protein is Bestrophin homolog 1 (best-1).